The following is a 441-amino-acid chain: Adenylyltransferase and sulfurtransferase MOCS3 (441 aa).

ATP contacts are provided by residues Gly-83, Asp-104, 111–115 (TNLHR), Lys-128, and 172–173 (DN). Residues Cys-213 and Cys-216 each contribute to the Zn(2+) site. Residue Cys-230 is the Glycyl thioester intermediate; for adenylyltransferase activity of the active site. Zn(2+) is bound by residues Cys-288 and Cys-291. The 101-residue stretch at 339 to 439 (AGRDHLLVDV…WTKTIDPNFP (101 aa)) folds into the Rhodanese domain. Cys-395 serves as the catalytic Cysteine persulfide intermediate; for sulfurtransferase activity.

This sequence in the N-terminal section; belongs to the HesA/MoeB/ThiF family. UBA4 subfamily. Zn(2+) is required as a cofactor.

The protein resides in the cytoplasm. The enzyme catalyses [molybdopterin-synthase sulfur-carrier protein]-C-terminal Gly-Gly + ATP + H(+) = [molybdopterin-synthase sulfur-carrier protein]-C-terminal Gly-Gly-AMP + diphosphate. It catalyses the reaction [molybdopterin-synthase sulfur-carrier protein]-C-terminal Gly-Gly-AMP + S-sulfanyl-L-cysteinyl-[cysteine desulfurase] + AH2 = [molybdopterin-synthase sulfur-carrier protein]-C-terminal-Gly-aminoethanethioate + L-cysteinyl-[cysteine desulfurase] + A + AMP + 2 H(+). It functions in the pathway tRNA modification; 5-methoxycarbonylmethyl-2-thiouridine-tRNA biosynthesis. Its pathway is cofactor biosynthesis; molybdopterin biosynthesis. In terms of biological role, plays a central role in 2-thiolation of mcm(5)S(2)U at tRNA wobble positions of cytosolic tRNA(Lys), tRNA(Glu) and tRNA(Gln). Also essential during biosynthesis of the molybdenum cofactor. Acts by mediating the C-terminal thiocarboxylation of sulfur carriers URM1 and MOCS2A. Its N-terminus first activates URM1 and MOCS2A as acyl-adenylates (-COAMP), then the persulfide sulfur on the catalytic cysteine is transferred to URM1 and MOCS2A to form thiocarboxylation (-COSH) of their C-terminus. The reaction probably involves hydrogen sulfide that is generated from the persulfide intermediate and that acts as a nucleophile towards URM1 and MOCS2A. Subsequently, a transient disulfide bond is formed. Does not use thiosulfate as sulfur donor; NFS1 probably acting as a sulfur donor for thiocarboxylation reactions. This Anopheles gambiae (African malaria mosquito) protein is Adenylyltransferase and sulfurtransferase MOCS3.